A 290-amino-acid chain; its full sequence is Putative tyrosine recombinase TTE1313 (290 aa).

A Core-binding (CB) domain is found at 1-85 (MAESVVGEFL…SIKAFYHYLF (85 aa)). The region spanning 106-290 (KEPVTLTVEQ…EVYNKFHPRA (185 aa)) is the Tyr recombinase domain. R239 is an active-site residue. Residue Y283 is the O-(3'-phospho-DNA)-tyrosine intermediate of the active site.

Belongs to the 'phage' integrase family.

The protein localises to the cytoplasm. Its function is as follows. Site-specific tyrosine recombinase, which acts by catalyzing the cutting and rejoining of the recombining DNA molecules. In Caldanaerobacter subterraneus subsp. tengcongensis (strain DSM 15242 / JCM 11007 / NBRC 100824 / MB4) (Thermoanaerobacter tengcongensis), this protein is Putative tyrosine recombinase TTE1313.